Here is a 70-residue protein sequence, read N- to C-terminus: MQGVQEQIEELQTKLAFQELTVEELNQEVIKLNRLVAYQQHQIQLLVGKLQAMEPSNIATQAEETPPPHY.

It belongs to the SlyX family.

This chain is Protein SlyX homolog, found in Shewanella putrefaciens (strain CN-32 / ATCC BAA-453).